Here is a 352-residue protein sequence, read N- to C-terminus: Holliday junction branch migration complex subunit RuvB (352 aa).

Residues F13–Y201 form a large ATPase domain (RuvB-L) region. ATP is bound by residues R41, G82, K85, T86, T87, E148–F150, R191, Y201, and R238. T86 serves as a coordination point for Mg(2+). Residues T202–Q273 are small ATPAse domain (RuvB-S). A head domain (RuvB-H) region spans residues E276–F352. DNA-binding residues include R330 and R335.

It belongs to the RuvB family. In terms of assembly, homohexamer. Forms an RuvA(8)-RuvB(12)-Holliday junction (HJ) complex. HJ DNA is sandwiched between 2 RuvA tetramers; dsDNA enters through RuvA and exits via RuvB. An RuvB hexamer assembles on each DNA strand where it exits the tetramer. Each RuvB hexamer is contacted by two RuvA subunits (via domain III) on 2 adjacent RuvB subunits; this complex drives branch migration. In the full resolvosome a probable DNA-RuvA(4)-RuvB(12)-RuvC(2) complex forms which resolves the HJ.

It localises to the cytoplasm. The enzyme catalyses ATP + H2O = ADP + phosphate + H(+). Its function is as follows. The RuvA-RuvB-RuvC complex processes Holliday junction (HJ) DNA during genetic recombination and DNA repair, while the RuvA-RuvB complex plays an important role in the rescue of blocked DNA replication forks via replication fork reversal (RFR). RuvA specifically binds to HJ cruciform DNA, conferring on it an open structure. The RuvB hexamer acts as an ATP-dependent pump, pulling dsDNA into and through the RuvAB complex. RuvB forms 2 homohexamers on either side of HJ DNA bound by 1 or 2 RuvA tetramers; 4 subunits per hexamer contact DNA at a time. Coordinated motions by a converter formed by DNA-disengaged RuvB subunits stimulates ATP hydrolysis and nucleotide exchange. Immobilization of the converter enables RuvB to convert the ATP-contained energy into a lever motion, pulling 2 nucleotides of DNA out of the RuvA tetramer per ATP hydrolyzed, thus driving DNA branch migration. The RuvB motors rotate together with the DNA substrate, which together with the progressing nucleotide cycle form the mechanistic basis for DNA recombination by continuous HJ branch migration. Branch migration allows RuvC to scan DNA until it finds its consensus sequence, where it cleaves and resolves cruciform DNA. The protein is Holliday junction branch migration complex subunit RuvB of Prochlorococcus marinus (strain AS9601).